Here is a 45-residue protein sequence, read N- to C-terminus: Endo-1,4-beta-xylanase Xyn10A (45 aa).

It belongs to the glycosyl hydrolase 10 (cellulase F) family.

Its subcellular location is the secreted. The protein resides in the extracellular space. The enzyme catalyses Endohydrolysis of (1-&gt;4)-beta-D-xylosidic linkages in xylans.. It carries out the reaction Endohydrolysis of (1-&gt;4)-beta-D-glucosidic linkages in cellulose, lichenin and cereal beta-D-glucans.. It functions in the pathway glycan degradation; xylan degradation. Functionally, has xylanase, avicelase and cellobiohydrolase activity. In Gloeophyllum trabeum (Brown rot fungus), this protein is Endo-1,4-beta-xylanase Xyn10A.